We begin with the raw amino-acid sequence, 745 residues long: 5-methyltetrahydropteroyltriglutamate--homocysteine methyltransferase (745 aa).

5-methyltetrahydropteroyltri-L-glutamate is bound by residues 16–19 (REWK) and Lys-110. L-homocysteine is bound by residues 420 to 422 (IGS) and Glu-473. L-methionine-binding positions include 420 to 422 (IGS) and Glu-473. Residue Trp-550 coordinates 5-methyltetrahydropteroyltri-L-glutamate. L-homocysteine is bound at residue Asp-588. Residue Asp-588 participates in L-methionine binding. Glu-594 lines the 5-methyltetrahydropteroyltri-L-glutamate pocket. Residues His-630, Cys-632, and Glu-654 each coordinate Zn(2+). Residue His-683 is the Proton donor of the active site. A Zn(2+)-binding site is contributed by Cys-715.

Belongs to the vitamin-B12 independent methionine synthase family. It depends on Zn(2+) as a cofactor.

It catalyses the reaction 5-methyltetrahydropteroyltri-L-glutamate + L-homocysteine = tetrahydropteroyltri-L-glutamate + L-methionine. The protein operates within amino-acid biosynthesis; L-methionine biosynthesis via de novo pathway; L-methionine from L-homocysteine (MetE route): step 1/1. In terms of biological role, catalyzes the transfer of a methyl group from 5-methyltetrahydrofolate to homocysteine resulting in methionine formation. This chain is 5-methyltetrahydropteroyltriglutamate--homocysteine methyltransferase, found in Streptococcus agalactiae serotype III (strain NEM316).